A 331-amino-acid chain; its full sequence is CRISPR-associated endonuclease Cas1 (331 aa).

Residues E158, H223, and D238 each coordinate Mn(2+).

This sequence belongs to the CRISPR-associated endonuclease Cas1 family. In terms of assembly, homodimer, forms a heterotetramer with a Cas2 homodimer. Mg(2+) serves as cofactor. It depends on Mn(2+) as a cofactor.

CRISPR (clustered regularly interspaced short palindromic repeat), is an adaptive immune system that provides protection against mobile genetic elements (viruses, transposable elements and conjugative plasmids). CRISPR clusters contain spacers, sequences complementary to antecedent mobile elements, and target invading nucleic acids. CRISPR clusters are transcribed and processed into CRISPR RNA (crRNA). Acts as a dsDNA endonuclease. Involved in the integration of spacer DNA into the CRISPR cassette. Plasmid targeted by CRISPR locus P1 transform wild-type cells very poorly. The polypeptide is CRISPR-associated endonuclease Cas1 (Haloferax volcanii (strain ATCC 29605 / DSM 3757 / JCM 8879 / NBRC 14742 / NCIMB 2012 / VKM B-1768 / DS2) (Halobacterium volcanii)).